Here is a 66-residue protein sequence, read N- to C-terminus: Gallinacin-5 (66 aa).

A signal peptide spans 1–19 (MQILTLLFAVLLLMLRAEP). A propeptide spanning residues 20-25 (GLSLAR) is cleaved from the precursor. Disulfide bonds link Cys-31–Cys-59, Cys-38–Cys-53, and Cys-43–Cys-60.

Belongs to the beta-defensin family. As to expression, strong expression in the tongue and bone marrow. Low expression in the esophagus, trachea, lung, brain and ovary. Expressed in the ovarian stroma, but not in the ovarian follicles.

The protein resides in the secreted. It localises to the cytoplasmic granule. Has bactericidal activity. This is Gallinacin-5 (GAL5) from Gallus gallus (Chicken).